A 359-amino-acid chain; its full sequence is Holliday junction branch migration complex subunit RuvB (359 aa).

The segment covering 1–10 (MPEHDPHQEN) has biased composition (basic and acidic residues). The segment at 1–20 (MPEHDPHQENRTVSSVRLED) is disordered. The segment at 4 to 188 (HDPHQENRTV…FGIPLRLIFY (185 aa)) is large ATPase domain (RuvB-L). ATP contacts are provided by residues L27, R28, G69, K72, T73, T74, 135-137 (EDF), R178, Y188, and R225. T73 provides a ligand contact to Mg(2+). Positions 189–259 (TASELELIVS…TADAALQRLE (71 aa)) are small ATPAse domain (RuvB-S). The segment at 262 to 359 (SLGLDAMDRR…LLHRDGSADE (98 aa)) is head domain (RuvB-H). Residues R298, R317, and R322 each contribute to the DNA site.

It belongs to the RuvB family. Homohexamer. Forms an RuvA(8)-RuvB(12)-Holliday junction (HJ) complex. HJ DNA is sandwiched between 2 RuvA tetramers; dsDNA enters through RuvA and exits via RuvB. An RuvB hexamer assembles on each DNA strand where it exits the tetramer. Each RuvB hexamer is contacted by two RuvA subunits (via domain III) on 2 adjacent RuvB subunits; this complex drives branch migration. In the full resolvosome a probable DNA-RuvA(4)-RuvB(12)-RuvC(2) complex forms which resolves the HJ.

It localises to the cytoplasm. It carries out the reaction ATP + H2O = ADP + phosphate + H(+). The RuvA-RuvB-RuvC complex processes Holliday junction (HJ) DNA during genetic recombination and DNA repair, while the RuvA-RuvB complex plays an important role in the rescue of blocked DNA replication forks via replication fork reversal (RFR). RuvA specifically binds to HJ cruciform DNA, conferring on it an open structure. The RuvB hexamer acts as an ATP-dependent pump, pulling dsDNA into and through the RuvAB complex. RuvB forms 2 homohexamers on either side of HJ DNA bound by 1 or 2 RuvA tetramers; 4 subunits per hexamer contact DNA at a time. Coordinated motions by a converter formed by DNA-disengaged RuvB subunits stimulates ATP hydrolysis and nucleotide exchange. Immobilization of the converter enables RuvB to convert the ATP-contained energy into a lever motion, pulling 2 nucleotides of DNA out of the RuvA tetramer per ATP hydrolyzed, thus driving DNA branch migration. The RuvB motors rotate together with the DNA substrate, which together with the progressing nucleotide cycle form the mechanistic basis for DNA recombination by continuous HJ branch migration. Branch migration allows RuvC to scan DNA until it finds its consensus sequence, where it cleaves and resolves cruciform DNA. This Granulibacter bethesdensis (strain ATCC BAA-1260 / CGDNIH1) protein is Holliday junction branch migration complex subunit RuvB.